Here is an 808-residue protein sequence, read N- to C-terminus: Enhancer of polycomb homolog 2 (808 aa).

Residues K135, K195, and K324 each participate in a glycyl lysine isopeptide (Lys-Gly) (interchain with G-Cter in SUMO2) cross-link. Residues 337 to 357 (YPKKPKAEAGIAPQQPTPETL) are disordered. K362 participates in a covalent cross-link: Glycyl lysine isopeptide (Lys-Gly) (interchain with G-Cter in SUMO2). Disordered stretches follow at residues 371–397 (QSSD…PDGS), 595–630 (QRQQ…CMSK), and 645–682 (VSAP…LYST). Residues 595–614 (QRQQLAQLHQKQQSQHSSQQ) are compositionally biased toward low complexity. Composition is skewed to polar residues over residues 615–630 (THPK…CMSK) and 658–682 (EQNT…LYST). At S755 the chain carries Phosphoserine.

This sequence belongs to the enhancer of polycomb family.

The protein localises to the nucleus. May play a role in transcription or DNA repair. The polypeptide is Enhancer of polycomb homolog 2 (Epc2) (Mus musculus (Mouse)).